We begin with the raw amino-acid sequence, 263 residues long: Tryptophan synthase alpha chain (263 aa).

Catalysis depends on proton acceptor residues glutamate 50 and aspartate 61.

The protein belongs to the TrpA family. As to quaternary structure, tetramer of two alpha and two beta chains.

The enzyme catalyses (1S,2R)-1-C-(indol-3-yl)glycerol 3-phosphate + L-serine = D-glyceraldehyde 3-phosphate + L-tryptophan + H2O. The protein operates within amino-acid biosynthesis; L-tryptophan biosynthesis; L-tryptophan from chorismate: step 5/5. In terms of biological role, the alpha subunit is responsible for the aldol cleavage of indoleglycerol phosphate to indole and glyceraldehyde 3-phosphate. The chain is Tryptophan synthase alpha chain from Clostridium acetobutylicum (strain ATCC 824 / DSM 792 / JCM 1419 / IAM 19013 / LMG 5710 / NBRC 13948 / NRRL B-527 / VKM B-1787 / 2291 / W).